A 416-amino-acid chain; its full sequence is LL-diaminopimelate aminotransferase (416 aa).

Y15 and G42 together coordinate substrate. Pyridoxal 5'-phosphate is bound by residues Y72, 108–109 (SK), Y132, N187, Y218, and 246–248 (SFS). 3 residues coordinate substrate: K109, Y132, and N187. K249 carries the N6-(pyridoxal phosphate)lysine modification. Pyridoxal 5'-phosphate is bound by residues R257 and N292. Residues N292 and R388 each coordinate substrate.

The protein belongs to the class-I pyridoxal-phosphate-dependent aminotransferase family. LL-diaminopimelate aminotransferase subfamily. Homodimer. Pyridoxal 5'-phosphate serves as cofactor.

The enzyme catalyses (2S,6S)-2,6-diaminopimelate + 2-oxoglutarate = (S)-2,3,4,5-tetrahydrodipicolinate + L-glutamate + H2O + H(+). Its pathway is amino-acid biosynthesis; L-lysine biosynthesis via DAP pathway; LL-2,6-diaminopimelate from (S)-tetrahydrodipicolinate (aminotransferase route): step 1/1. Its function is as follows. Involved in the synthesis of meso-diaminopimelate (m-DAP or DL-DAP), required for both lysine and peptidoglycan biosynthesis. Catalyzes the direct conversion of tetrahydrodipicolinate to LL-diaminopimelate. This Synechococcus sp. (strain JA-2-3B'a(2-13)) (Cyanobacteria bacterium Yellowstone B-Prime) protein is LL-diaminopimelate aminotransferase.